Here is a 111-residue protein sequence, read N- to C-terminus: Inner membrane protein H108R (111 aa).

The helical transmembrane segment at 10–32 (LIVIITILITTRELSTTMLIVSL) threads the bilayer. The N-linked (GlcNAc...) asparagine; by host glycan is linked to Asn-65.

The protein belongs to the asfivirus H108R family.

The protein resides in the virion membrane. The polypeptide is Inner membrane protein H108R (African swine fever virus (isolate Tick/Malawi/Lil 20-1/1983) (ASFV)).